Reading from the N-terminus, the 1174-residue chain is Pecanex-like protein 4 (1174 aa).

14 helical membrane passes run 40-60, 72-92, 140-160, 173-193, 217-237, 244-264, 284-304, 307-327, 366-386, 394-414, 451-471, 543-563, 580-600, and 643-663; these read IYVN…TGTL, AAAL…LISV, TVFH…YLLP, TAVL…SLIV, LYIF…NIPA, ILHI…LPPP, SMST…AAVV, FIPS…LLSL, FLFI…HHYV, SGAQ…VWIL, IGAV…VAFL, LIQF…LWTE, VFAP…SPLL, and LTAA…LPGS. Over residues 785–797 the composition is skewed to polar residues; that stretch reads PSTQENKTENTGE. Residues 785-875 are disordered; sequence PSTQENKTEN…DDHSAGTGPK (91 aa). Asparagine 790 carries an N-linked (GlcNAc...) asparagine glycan. Positions 798–810 are enriched in low complexity; it reads ASPALPPAANSSP. The span at 835–846 shows a compositional bias: basic and acidic residues; it reads PAIKNRKEKLQS. Asparagine 1122 and asparagine 1149 each carry an N-linked (GlcNAc...) asparagine glycan.

The protein belongs to the pecanex family.

It is found in the membrane. The chain is Pecanex-like protein 4 from Mus musculus (Mouse).